A 323-amino-acid polypeptide reads, in one-letter code: Olfactory receptor 4K5 (323 aa).

Over Met-1–Leu-25 the chain is Extracellular. A glycan (N-linked (GlcNAc...) asparagine) is linked at Asn-5. A helical transmembrane segment spans residues Phe-26–Val-49. The Cytoplasmic segment spans residues Thr-50 to Ser-57. The chain crosses the membrane as a helical span at residues Pro-58–Pro-79. The Extracellular portion of the chain corresponds to Lys-80–Gln-100. Cys-97 and Cys-189 are joined by a disulfide. Residues Ile-101–Tyr-120 form a helical membrane-spanning segment. The Cytoplasmic segment spans residues Asp-121–Arg-139. The helical transmembrane segment at Thr-140–Ser-158 threads the bilayer. Over Gln-159–Ile-195 the chain is Extracellular. Residues Glu-196–Ile-219 form a helical membrane-spanning segment. Over Ile-220–Lys-235 the chain is Cytoplasmic. Residues Ala-236 to Tyr-258 traverse the membrane as a helical segment. At Val-259–Lys-269 the chain is on the extracellular side. The helical transmembrane segment at Phe-270–Leu-289 threads the bilayer. Over Arg-290–His-323 the chain is Cytoplasmic.

This sequence belongs to the G-protein coupled receptor 1 family.

The protein localises to the cell membrane. Functionally, odorant receptor. The sequence is that of Olfactory receptor 4K5 (OR4K5) from Homo sapiens (Human).